The primary structure comprises 185 residues: Protein E3 homolog (185 aa).

Residues 7-73 (TVNDAEIFSL…SNPPKWFKNY (67 aa)) form the Z-binding domain. The region spanning 112 to 179 (NPCIVLNEYC…SKITMDEILD (68 aa)) is the DRBM domain.

Belongs to the poxviridae E3 protein family.

In terms of biological role, RNA-binding protein that plays a role in the inhibition of multiple cellular antiviral responses activated by double-stranded RNA (dsRNA), such as inhibition of PKR activation, necroptosis, and IFN-mediated antiviral activities. Recognizes and binds Z-RNA structures via its Z-binding domain and dsRNA via its DRBM domain: RNA-binding activity is required to escape host ZBP1-dependent necroptosis. Mechanistically, the Z-binding domain binds Z-RNAs that are produced during Yaba-like disease virus infection, thereby competing with Z-RNA detection by host ZBP1, suppressing ZBP1-dependent necroptosis. The chain is Protein E3 homolog from Yaba-like disease virus (YLDV).